A 184-amino-acid chain; its full sequence is Glucosamine 6-phosphate N-acetyltransferase (184 aa).

Residues 39-184 enclose the N-acetyltransferase domain; that stretch reads LVLRPLCTAD…ENYMCRRFLK (146 aa). Substrate contacts are provided by residues threonine 61, 108 to 111, and 120 to 122; these read KFIH and EDV. 130–135 contributes to the acetyl-CoA binding site; the sequence is GKQLGK. A substrate-binding site is contributed by 151 to 152; that stretch reads YK. Position 165–167 (165–167) interacts with acetyl-CoA; it reads YKK. Substrate contacts are provided by glutamate 175 and arginine 181.

This sequence belongs to the acetyltransferase family. GNA1 subfamily. In terms of assembly, homodimer. In terms of tissue distribution, ubiquitous. Shows a strong differential expression pattern in adult hematopoietic precursor cells.

The protein resides in the golgi apparatus membrane. It localises to the endosome membrane. It catalyses the reaction D-glucosamine 6-phosphate + acetyl-CoA = N-acetyl-D-glucosamine 6-phosphate + CoA + H(+). The protein operates within nucleotide-sugar biosynthesis; UDP-N-acetyl-alpha-D-glucosamine biosynthesis; N-acetyl-alpha-D-glucosamine 1-phosphate from alpha-D-glucosamine 6-phosphate (route I): step 1/2. This Mus musculus (Mouse) protein is Glucosamine 6-phosphate N-acetyltransferase (Gnpnat1).